The following is a 126-amino-acid chain: Thioredoxin-like 3-3 (126 aa).

The disordered stretch occupies residues 1 to 24 (MRKQESEGANLEFESKSNDNGNVK). Positions 5–126 (ESEGANLEFE…RLHDRLWLHS (122 aa)) constitute a Thioredoxin domain. Residues C55 and C58 each act as nucleophile in the active site. The cysteines at positions 55 and 58 are disulfide-linked.

This sequence belongs to the thioredoxin family.

Probable thiol-disulfide oxidoreductase that may participate in various redox reactions. The chain is Thioredoxin-like 3-3 from Arabidopsis thaliana (Mouse-ear cress).